The chain runs to 553 residues: Undecaprenyl phosphate-alpha-4-amino-4-deoxy-L-arabinose arabinosyl transferase (553 aa).

The next 12 membrane-spanning stretches (helical) occupy residues 8-28 (LLFSLFYALYYLIPLELRALW), 81-101 (FAVRIGSVFSITLSALLVYWL), 113-133 (LLSAVVFLTCLLVYGVGSYAV), 136-156 (PMVTLWLVAAMCSFWLAAQSA), 176-196 (LMTKGFLALAVPVVAIVPWMI), 204-224 (LLLFGPLALVSAALITAPWAI), 255-275 (APFWYYLPMLLAGALPWVGLL), 289-309 (NSGSLYLLCWTVMPLLFFSLA), 313-333 (LPTYILPCFAPLAILLAHHGI), 351-371 (VAFGVIAALAVILVLAPWGLV), 384-404 (VLLGASAFLFWAAVGLACLVA), and 412-432 (AALCPLGLALLAGAVIPDKVI).

This sequence belongs to the glycosyltransferase 83 family.

It is found in the cell inner membrane. The catalysed reaction is 4-amino-4-deoxy-alpha-L-arabinopyranosyl di-trans,octa-cis-undecaprenyl phosphate + lipid IVA = lipid IIA + di-trans,octa-cis-undecaprenyl phosphate.. The protein operates within lipopolysaccharide metabolism; 4-amino-4-deoxy-beta-L-arabinose-lipid A biosynthesis. Its function is as follows. Catalyzes the transfer of the L-Ara4N moiety of the glycolipid undecaprenyl phosphate-alpha-L-Ara4N to lipid A. The modified arabinose is attached to lipid A and is required for resistance to polymyxin and cationic antimicrobial peptides. This chain is Undecaprenyl phosphate-alpha-4-amino-4-deoxy-L-arabinose arabinosyl transferase, found in Erwinia tasmaniensis (strain DSM 17950 / CFBP 7177 / CIP 109463 / NCPPB 4357 / Et1/99).